Consider the following 272-residue polypeptide: Biglycan (272 aa).

A signal peptide spans 1–16 (MWPLWLLASLLALSQA). The propeptide occupies 17–37 (LPFEQKAFWDFTLDDGLPMLN). O-linked (Xyl...) (glycosaminoglycan) serine glycans are attached at residues S42 and S48. The LRRNT domain maps to 55 to 91 (ALPPTFSAMCPFGCHCHLRVVQCSDLGLKAVPKEISP). Intrachain disulfides connect C64/C70 and C68/C77. LRR repeat units lie at residues 92–113 (DTTLLDLQNNDISELRKDDFKG), 116–137 (HLYALVLVNNKISRSTRRPSAP), 138–161 (DGLKLNYLRISEAKLTGIPKDLPE), 162–183 (TLNELHLDHNKIQAIELEDLLR), 186–209 (KLYRLGLGHNQIRMIENGSLSFLP), 210–232 (TLRELHLDNNKLSRVPAGLPDLK), 233–254 (LLQVVYLHTNNITKVGVNDFCP), and 255–272 (VGFGVKRAYYNGISLFNN).

The protein belongs to the small leucine-rich proteoglycan (SLRP) family. SLRP class I subfamily. As to quaternary structure, homodimer. Forms a ternary complex with MFAP2 and ELN. The two attached glycosaminoglycan chains can be either chondroitin sulfate or dermatan sulfate. As to expression, found in several connective tissues, especially in articular cartilages.

The protein resides in the secreted. It is found in the extracellular space. Its subcellular location is the extracellular matrix. Its function is as follows. May be involved in collagen fiber assembly. In Sus scrofa (Pig), this protein is Biglycan (BGN).